We begin with the raw amino-acid sequence, 110 residues long: MAKPIEVHDSDFAEKVLKSKTPVVVDFWAPWCGPCRVIAPILDKLAGEYAGRLTIAKVNTDDNVQYASQLGIQGIPTLVIFKDGREVGRLVGARPEAMYREIFDKVLAMA.

Positions 3-108 constitute a Thioredoxin domain; sequence KPIEVHDSDF…YREIFDKVLA (106 aa). A disulfide bridge connects residues cysteine 32 and cysteine 35. Residue lysine 105 is modified to N6,N6-dimethyllysine; alternate. Position 105 is an N6-methyllysine; alternate (lysine 105).

Functionally, participates in various redox reactions through the reversible oxidation of its active center dithiol to a disulfide and catalyzes dithiol-disulfide exchange reactions. In Chloroflexus aurantiacus (strain ATCC 29366 / DSM 635 / J-10-fl), this protein is Thioredoxin (trxA).